A 249-amino-acid chain; its full sequence is Geranylgeranylglyceryl phosphate synthase (249 aa).

Mg(2+) is bound by residues Asp-20 and Ser-49. Sn-glycerol 1-phosphate contacts are provided by residues 169-175 (YLDAGSG), 200-201 (GG), and 222-223 (GN).

This sequence belongs to the GGGP/HepGP synthase family. Group II subfamily. As to quaternary structure, homohexamer. The cofactor is Mg(2+).

It catalyses the reaction sn-glycerol 1-phosphate + (2E,6E,10E)-geranylgeranyl diphosphate = sn-3-O-(geranylgeranyl)glycerol 1-phosphate + diphosphate. Its function is as follows. Prenyltransferase that catalyzes the transfer of the geranylgeranyl moiety of geranylgeranyl diphosphate (GGPP) to the C3 hydroxyl of sn-glycerol-1-phosphate (G1P). In Spirosoma linguale (strain ATCC 33905 / DSM 74 / LMG 10896 / Claus 1), this protein is Geranylgeranylglyceryl phosphate synthase.